We begin with the raw amino-acid sequence, 294 residues long: Proteasome subunit beta (294 aa).

The propeptide at 1-65 (MTADRPALRT…MESGDLAPHG (65 aa)) is removed in mature form; by autocatalysis. Catalysis depends on Thr66, which acts as the Nucleophile.

The protein belongs to the peptidase T1B family. In terms of assembly, the 20S proteasome core is composed of 14 alpha and 14 beta subunits that assemble into four stacked heptameric rings, resulting in a barrel-shaped structure. The two inner rings, each composed of seven catalytic beta subunits, are sandwiched by two outer rings, each composed of seven alpha subunits. The catalytic chamber with the active sites is on the inside of the barrel. Has a gated structure, the ends of the cylinder being occluded by the N-termini of the alpha-subunits. Is capped by the proteasome-associated ATPase, ARC.

The protein localises to the cytoplasm. The catalysed reaction is Cleavage of peptide bonds with very broad specificity.. It functions in the pathway protein degradation; proteasomal Pup-dependent pathway. With respect to regulation, the formation of the proteasomal ATPase ARC-20S proteasome complex, likely via the docking of the C-termini of ARC into the intersubunit pockets in the alpha-rings, may trigger opening of the gate for substrate entry. Interconversion between the open-gate and close-gate conformations leads to a dynamic regulation of the 20S proteasome proteolysis activity. In terms of biological role, component of the proteasome core, a large protease complex with broad specificity involved in protein degradation. This chain is Proteasome subunit beta, found in Rhodococcus jostii (strain RHA1).